Consider the following 909-residue polypeptide: ABC transporter B family member 1 (909 aa).

The tract at residues methionine 1–lysine 36 is disordered. Residues leucine 14–lysine 36 show a composition bias toward polar residues. The helical transmembrane segment at leucine 85–leucine 105 threads the bilayer. The span at threonine 125 to serine 134 shows a compositional bias: low complexity. The interval threonine 125–threonine 147 is disordered. Positions threonine 135–serine 145 are enriched in pro residues. Transmembrane regions (helical) follow at residues phenylalanine 182–isoleucine 202, serine 206–isoleucine 226, isoleucine 275–isoleucine 295, leucine 347–methionine 367, leucine 392–phenylalanine 412, valine 480–valine 500, glycine 572–valine 592, and leucine 607–leucine 627. One can recognise an ABC transmembrane type-1 domain in the interval isoleucine 350 to lysine 633. The 237-residue stretch at isoleucine 666–lysine 902 folds into the ABC transporter domain. Glycine 701 to serine 708 contacts ATP.

Belongs to the ABC transporter superfamily. ABCB family.

The protein localises to the membrane. The protein is ABC transporter B family member 1 (abcB1) of Dictyostelium discoideum (Social amoeba).